The sequence spans 319 residues: Olfactory receptor 56B4 (319 aa).

Over 1-31 (MDTSTSVTYDSSLQISQFILMGLPGIHEWQH) the chain is Extracellular. The chain crosses the membrane as a helical span at residues 32–52 (WLSLPLTLLYLLALGANLLII). Over 53–60 (ITIQHETV) the chain is Cytoplasmic. The helical transmembrane segment at 61-81 (LHEPMYHLLGILAVVDIGLAT) threads the bilayer. Over 82-105 (TIMPKILAIFWFDAKAISLPMCFA) the chain is Extracellular. A disulfide bridge connects residues Cys-103 and Cys-195. Residues 106-126 (QIYAIHCFFCIESGIFLCMAV) traverse the membrane as a helical segment. The Cytoplasmic segment spans residues 127–145 (DRYIAICRPLQYPSIVTKA). A helical transmembrane segment spans residues 146–166 (FVFKATGFIMLRNGLLTIPVP). Residues 167-202 (ILAAQRHYCSRNEIEHCLCSNLGVISLACDDITVNK) are Extracellular-facing. The chain crosses the membrane as a helical span at residues 203–223 (FYQLMLAWVLVGSDMALVFSS). Topologically, residues 224–243 (YAVILHSVLRLNSAEAMSKA) are cytoplasmic. The chain crosses the membrane as a helical span at residues 244 to 263 (LSTCSSHLILILFHTGIIVL). Residues 264–277 (SVTHLAEKKIPLIP) lie on the Extracellular side of the membrane. The helical transmembrane segment at 278–298 (VFLNVLHNVIPPALNPLACAL) threads the bilayer. Residues 299-319 (RMHKLRLGFQRLLGLGQDVSK) lie on the Cytoplasmic side of the membrane.

Belongs to the G-protein coupled receptor 1 family.

It localises to the cell membrane. Its function is as follows. Odorant receptor. This chain is Olfactory receptor 56B4 (OR56B4), found in Homo sapiens (Human).